The sequence spans 853 residues: Cytochrome P450 monooxygenase mpaDE' (853 aa).

The Lumenal portion of the chain corresponds to 1–6; it reads MESLSL. A helical transmembrane segment spans residues 7 to 29; the sequence is TWITAIAVVLYLVQRYVRSYWRL. Residues 30-853 lie on the Cytoplasmic side of the membrane; it reads KDIPGPVLAK…DIENAIEGQK (824 aa). Heme is bound at residue Cys449.

This sequence belongs to the cytochrome P450 family. Heme is required as a cofactor.

It localises to the endoplasmic reticulum membrane. It carries out the reaction 5-methylorsellinate + reduced [NADPH--hemoprotein reductase] + O2 = 4,6-dihydroxy-2-(hydroxymethyl)-3-methylbenzoate + oxidized [NADPH--hemoprotein reductase] + H2O + H(+). The enzyme catalyses 4,6-dihydroxy-2-(hydroxymethyl)-3-methylbenzoate + H(+) = 5,7-dihydroxy-4-methylphthalide + H2O. Its pathway is secondary metabolite biosynthesis; terpenoid biosynthesis. Cytochrome P450 monooxygenase; part of the gene cluster that mediates the biosynthesis of mycophenolic acid (MPA), the first isolated antibiotic natural product in the world obtained from a culture of Penicillium brevicompactum in 1893. MpaDE' is an endoplasmic reticulum-bound enzyme that catalyzes the conversion of 5-methylorsellinic acid (5MOA) into the phthalide compound 5,7-dihydroxy-4,6-dimethylphthalide (DHMP). MpaDE' first catalyzes hydroxylation of 5-MOA to 4,6-dihydroxy-2-(hydroxymethyl)-3-methylbenzoic acid (DHMB), and then acts as a lactone synthase that catalyzes the ring closure to convert DHMB into DHMP. The first step of the pathway is the synthesis of 5-methylorsellinic acid (5MOA) by the cytosolic polyketide synthase mpaC. 5MOA is then converted to the phthalide compound 5,7-dihydroxy-4,6-dimethylphthalide (DHMP) by the endoplasmic reticulum-bound cytochrome P450 monooxygenase mpaDE. MpaDE first catalyzes hydroxylation of 5-MOA to 4,6-dihydroxy-2-(hydroxymethyl)-3-methylbenzoic acid (DHMB). MpaDE then acts as a lactone synthase that catalyzes the ring closure to convert DHMB into DHMP. The next step is the prenylation of DHMP by the Golgi apparatus-associated prenyltransferase mpaA to yield farnesyl-DHMP (FDHMP). The ER-bound oxygenase mpaB then mediates the oxidative cleavage the C19-C20 double bond in FDHMP to yield FDHMP-3C via a mycophenolic aldehyde intermediate. The O-methyltransferase mpaG catalyzes the methylation of FDHMP-3C to yield MFDHMP-3C. After the cytosolic methylation of FDHMP-3C, MFDHMP-3C enters into peroxisomes probably via free diffusion due to its low molecular weight. Upon a peroxisomal CoA ligation reaction, catalyzed by a beta-oxidation component enzyme acyl-CoA ligase ACL891, MFDHMP-3C-CoA would then be restricted to peroxisomes for the following beta-oxidation pathway steps. The peroxisomal beta-oxidation machinery than converts MFDHMP-3C-CoA into MPA_CoA, via a beta-oxidation chain-shortening process. Finally mpaH acts as a peroxisomal acyl-CoA hydrolase with high substrate specificity toward MPA-CoA to release the final product MPA. The protein is Cytochrome P450 monooxygenase mpaDE' of Penicillium brevicompactum.